A 332-amino-acid chain; its full sequence is Leucine carboxyl methyltransferase 1 homolog (332 aa).

S-adenosyl-L-methionine is bound by residues lysine 22, arginine 57, glycine 83, aspartate 107, 153–154, and glutamate 180; that span reads DL.

Belongs to the methyltransferase superfamily. LCMT family.

The protein localises to the cytoplasm. It localises to the membrane. The catalysed reaction is [phosphatase 2A protein]-C-terminal L-leucine + S-adenosyl-L-methionine = [phosphatase 2A protein]-C-terminal L-leucine methyl ester + S-adenosyl-L-homocysteine. Methylates the carboxyl group of the C-terminal leucine residue of protein phosphatase 2A (PP2A) catalytic subunits to form alpha-leucine ester residues. Involved in brassinosteroid (BR) signaling. Plays a negative role in BR signaling pathway. Functions as a positive regulator of BRI1 receptor-kinase degradation. Methylates PP2A, thus facilitating its association with activated BRI1. This leads to receptor dephosphorylation and degradation, and thus to the termination of BR signaling. May act upstream of ASK7/BIN2. Involved in methylation of PP2A during environmental stress responses. The polypeptide is Leucine carboxyl methyltransferase 1 homolog (Arabidopsis thaliana (Mouse-ear cress)).